The primary structure comprises 330 residues: Tryptophan--tRNA ligase (330 aa).

ATP contacts are provided by residues 10–12 (QAT) and 18–19 (GN). Positions 11 to 19 (ATGSLHLGN) match the 'HIGH' region motif. An L-tryptophan-binding site is contributed by D134. ATP is bound by residues 146–148 (GED), I186, and 195–199 (KMSKS). The 'KMSKS' region motif lies at 195–199 (KMSKS).

It belongs to the class-I aminoacyl-tRNA synthetase family. As to quaternary structure, homodimer.

It is found in the cytoplasm. It catalyses the reaction tRNA(Trp) + L-tryptophan + ATP = L-tryptophyl-tRNA(Trp) + AMP + diphosphate + H(+). Functionally, catalyzes the attachment of tryptophan to tRNA(Trp). This chain is Tryptophan--tRNA ligase, found in Rickettsia conorii (strain ATCC VR-613 / Malish 7).